Here is an 84-residue protein sequence, read N- to C-terminus: MAVRLRLQRRGKPKRPYYRVVAIDQRAKRDGEPIEILGQYDPIAEDNKFKVNIERINYWLGIGAKASETVAALIKKNQTVEIKQ.

It belongs to the bacterial ribosomal protein bS16 family.

In Endomicrobium trichonymphae, this protein is Small ribosomal subunit protein bS16.